A 775-amino-acid chain; its full sequence is Dipeptidyl peptidase 4 (775 aa).

Positions 1-15 (MKLLSLLMLAGIAQA) are cleaved as a signal peptide. 4 N-linked (GlcNAc...) asparagine glycosylation sites follow: N81, N111, N154, and N219. Active-site charge relay system residues include S613, D690, and H725.

The protein belongs to the peptidase S9B family.

Its subcellular location is the secreted. The enzyme catalyses Release of an N-terminal dipeptide, Xaa-Yaa-|-Zaa-, from a polypeptide, preferentially when Yaa is Pro, provided Zaa is neither Pro nor hydroxyproline.. Its function is as follows. Extracellular dipeptidyl-peptidase which removes N-terminal dipeptides sequentially from polypeptides having unsubstituted N-termini provided that the penultimate residue is proline. Contributes to pathogenicity. The chain is Dipeptidyl peptidase 4 (DPP4) from Trichophyton rubrum (Athlete's foot fungus).